The following is a 213-amino-acid chain: Thiamine-phosphate synthase (213 aa).

4-amino-2-methyl-5-(diphosphooxymethyl)pyrimidine is bound by residues 40 to 44 (QYRDK) and asparagine 72. 2 residues coordinate Mg(2+): aspartate 73 and aspartate 91. Threonine 110 serves as a coordination point for 4-amino-2-methyl-5-(diphosphooxymethyl)pyrimidine. Residue 137-139 (SHT) coordinates 2-[(2R,5Z)-2-carboxy-4-methylthiazol-5(2H)-ylidene]ethyl phosphate. 4-amino-2-methyl-5-(diphosphooxymethyl)pyrimidine is bound at residue lysine 140. Glycine 167 contacts 2-[(2R,5Z)-2-carboxy-4-methylthiazol-5(2H)-ylidene]ethyl phosphate.

It belongs to the thiamine-phosphate synthase family. The cofactor is Mg(2+).

The enzyme catalyses 2-[(2R,5Z)-2-carboxy-4-methylthiazol-5(2H)-ylidene]ethyl phosphate + 4-amino-2-methyl-5-(diphosphooxymethyl)pyrimidine + 2 H(+) = thiamine phosphate + CO2 + diphosphate. It catalyses the reaction 2-(2-carboxy-4-methylthiazol-5-yl)ethyl phosphate + 4-amino-2-methyl-5-(diphosphooxymethyl)pyrimidine + 2 H(+) = thiamine phosphate + CO2 + diphosphate. It carries out the reaction 4-methyl-5-(2-phosphooxyethyl)-thiazole + 4-amino-2-methyl-5-(diphosphooxymethyl)pyrimidine + H(+) = thiamine phosphate + diphosphate. Its pathway is cofactor biosynthesis; thiamine diphosphate biosynthesis; thiamine phosphate from 4-amino-2-methyl-5-diphosphomethylpyrimidine and 4-methyl-5-(2-phosphoethyl)-thiazole: step 1/1. Condenses 4-methyl-5-(beta-hydroxyethyl)thiazole monophosphate (THZ-P) and 2-methyl-4-amino-5-hydroxymethyl pyrimidine pyrophosphate (HMP-PP) to form thiamine monophosphate (TMP). This is Thiamine-phosphate synthase from Stutzerimonas stutzeri (strain A1501) (Pseudomonas stutzeri).